The sequence spans 183 residues: Translocon-associated protein subunit beta (183 aa).

The N-terminal stretch at 1–17 (MRLLASVLLALFAVSHA) is a signal peptide. The Lumenal portion of the chain corresponds to 18 to 149 (EEGARLLASK…DRRFSPHFLD (132 aa)). N-linked (GlcNAc...) asparagine glycosylation is found at Asn88 and Asn104. A helical transmembrane segment spans residues 150–169 (WAAFGVMTLPSIGIPLLLWY). Topologically, residues 170-183 (SSKRKYDTPKSKKN) are cytoplasmic.

This sequence belongs to the TRAP-beta family. Heterotetramer of TRAP-alpha, TRAP-beta, TRAP-delta and TRAP-gamma. Interacts with STING1.

It localises to the endoplasmic reticulum membrane. In terms of biological role, TRAP proteins are part of a complex whose function is to bind calcium to the ER membrane and thereby regulate the retention of ER resident proteins. The sequence is that of Translocon-associated protein subunit beta (SSR2) from Canis lupus familiaris (Dog).